A 496-amino-acid polypeptide reads, in one-letter code: tRNA modification GTPase mss1, mitochondrial (496 aa).

A mitochondrion-targeting transit peptide spans 1 to 19; sequence MRILNRVFLNTFQACFRRF. A TrmE-type G domain is found at 239–416; sequence GINVAILGPS…FLQALSSTFE (178 aa). GTP-binding positions include 246-253, 293-297, and 363-366; these read GPSNAGKS, DTAGL, and NKVD.

It belongs to the TRAFAC class TrmE-Era-EngA-EngB-Septin-like GTPase superfamily. TrmE GTPase family.

The protein localises to the mitochondrion. Its function is as follows. GTPase involved in the 5-carboxymethylaminomethyl modification (mnm(5)s(2)U34) of the wobble uridine base in mitochondrial tRNAs. This chain is tRNA modification GTPase mss1, mitochondrial (mss1), found in Schizosaccharomyces pombe (strain 972 / ATCC 24843) (Fission yeast).